The primary structure comprises 199 residues: Probable nicotinate-nucleotide adenylyltransferase (199 aa).

Belongs to the NadD family.

The catalysed reaction is nicotinate beta-D-ribonucleotide + ATP + H(+) = deamido-NAD(+) + diphosphate. Its pathway is cofactor biosynthesis; NAD(+) biosynthesis; deamido-NAD(+) from nicotinate D-ribonucleotide: step 1/1. In terms of biological role, catalyzes the reversible adenylation of nicotinate mononucleotide (NaMN) to nicotinic acid adenine dinucleotide (NaAD). This chain is Probable nicotinate-nucleotide adenylyltransferase, found in Rhizobium johnstonii (strain DSM 114642 / LMG 32736 / 3841) (Rhizobium leguminosarum bv. viciae).